Reading from the N-terminus, the 412-residue chain is Probable tRNA sulfurtransferase (412 aa).

A THUMP domain is found at 58-163; that stretch reads DEVIKQLGYV…SEGTYIYVGK (106 aa). ATP is bound by residues 181 to 182, 206 to 207, arginine 265, glycine 287, and glutamine 296; these read ML and HF.

It belongs to the ThiI family.

The protein localises to the cytoplasm. The catalysed reaction is [ThiI sulfur-carrier protein]-S-sulfanyl-L-cysteine + a uridine in tRNA + 2 reduced [2Fe-2S]-[ferredoxin] + ATP + H(+) = [ThiI sulfur-carrier protein]-L-cysteine + a 4-thiouridine in tRNA + 2 oxidized [2Fe-2S]-[ferredoxin] + AMP + diphosphate. The enzyme catalyses [ThiS sulfur-carrier protein]-C-terminal Gly-Gly-AMP + S-sulfanyl-L-cysteinyl-[cysteine desulfurase] + AH2 = [ThiS sulfur-carrier protein]-C-terminal-Gly-aminoethanethioate + L-cysteinyl-[cysteine desulfurase] + A + AMP + 2 H(+). It functions in the pathway cofactor biosynthesis; thiamine diphosphate biosynthesis. Its function is as follows. Catalyzes the ATP-dependent transfer of a sulfur to tRNA to produce 4-thiouridine in position 8 of tRNAs, which functions as a near-UV photosensor. Also catalyzes the transfer of sulfur to the sulfur carrier protein ThiS, forming ThiS-thiocarboxylate. This is a step in the synthesis of thiazole, in the thiamine biosynthesis pathway. The sulfur is donated as persulfide by IscS. The sequence is that of Probable tRNA sulfurtransferase from Acholeplasma laidlawii (strain PG-8A).